The following is a 181-amino-acid chain: TATA-box-binding protein (181 aa).

2 consecutive repeat copies span residues 8-84 (IENI…VDLM) and 99-175 (IQNI…YDRL).

Belongs to the TBP family.

Its function is as follows. General factor that plays a role in the activation of archaeal genes transcribed by RNA polymerase. Binds specifically to the TATA box promoter element which lies close to the position of transcription initiation. This is TATA-box-binding protein from Methanobrevibacter smithii (strain ATCC 35061 / DSM 861 / OCM 144 / PS).